The chain runs to 880 residues: MALRRSMGRPGLRPLLLAGLASLLLPGSAAAGLKLMGAPVKMTVSQGQPVKLNCSVEGMDDPDIHWMKDGAVVQNASQVSISISEQNWIGLLSLKSAERSDAGLYWCQVKDGEETKISQSVWLTVEGVPFFTVEPKDLAVPPNVPFQLSCEAVGPPEPVTIFWWRGPTKVGGPASSPSVLNVTGVTQRTEFSCEAHNIKGLATSRPAIIRLQAPPAAPFNITVTTISSSNASVAWVPGADGLALLHSCTVQVAHAPGEWEALAVVVPVPPFTCLLRNLAPATNYSLRVRCANALGPSPYGDWVPFQTKGLAPARAPQNFHAIRTDSGLILEWEEVIPEDPGEGPLGPYKLSWVQENGTQDELMVEGTTANLTDWDPQKDLVLRVCASNAIGDGPWSQPLVVSSHDHAGRQGPPHSRTSWVPVVLGVLTALITAAALALILLRKRRKETRFGQAFDSVMARGEPAVHFRAARSFNRERPERIEATLDSLGISDELKEKLEDVLIPEQQFTLGRMLGKGEFGSVREAQLKQEDGSFVKVAVKMLKADIIASSDIEEFLREAACMKEFDHPHVAKLVGVSLRSRAKGRLPIPMVILPFMKHGDLHAFLLASRIGENPFNLPLQTLVRFMVDIACGMEYLSSRNFIHRDLAARNCMLAEDMTVCVADFGLSRKIYSGDYYRQGCASKLPVKWLALESLADNLYTVHSDVWAFGVTMWEIMTRGQTPYAGIENAEIYNYLISGNRLKQPPECMEEVYDLMYQCWSADPKQRPSFTCLRMELENILGHLSVLSTSQDPLYINIERAGQPAENGSPELPCGEQSSSEAGDGSGMGAIGGIPSDCRYIFSPGGLAESPGQLEQQPESPLNENQRLLLLQQGLLPHSSC.

Positions 1-30 (MALRRSMGRPGLRPLLLAGLASLLLPGSAA) are cleaved as a signal peptide. Ig-like C2-type domains lie at 31–118 (AGLK…TKIS) and 129–210 (PFFT…AIIR). Residues 31-419 (AGLKLMGAPV…QGPPHSRTSW (389 aa)) are Extracellular-facing. 8 N-linked (GlcNAc...) asparagine glycosylation sites follow: Asn-53, Asn-75, Asn-181, Asn-220, Asn-230, Asn-283, Asn-356, and Asn-370. 2 disulfides stabilise this stretch: Cys-54/Cys-107 and Cys-150/Cys-193. Fibronectin type-III domains are found at residues 217–310 (APFN…TKGL) and 315–406 (APQN…SHDH). Residues 420 to 440 (VPVVLGVLTALITAAALALIL) form a helical membrane-spanning segment. Residues 441-880 (LRKRRKETRF…QQGLLPHSSC (440 aa)) lie on the Cytoplasmic side of the membrane. The residue at position 456 (Ser-456) is a Phosphoserine. The region spanning 508–785 (FTLGRMLGKG…LENILGHLSV (278 aa)) is the Protein kinase domain. ATP contacts are provided by residues 514–522 (LGKGEFGSV) and Lys-540. Asp-645 serves as the catalytic Proton acceptor. Phosphotyrosine; by autocatalysis occurs at positions 671, 675, 676, and 794. Disordered stretches follow at residues 804–827 (AENG…GSGM) and 842–864 (SPGG…LNEN). A phosphoserine mark is found at Ser-808 and Ser-859. Residues 852 to 864 (QLEQQPESPLNEN) show a composition bias toward polar residues.

The protein belongs to the protein kinase superfamily. Tyr protein kinase family. AXL/UFO subfamily. Monomer and homodimer. Interacts (via N-terminus) with extracellular ligands TULP1 and GAS6. Interacts with PIK3R1; this interaction increases PI3-kinase activity. Post-translationally, autophosphorylated. As to expression, abundant in the brain and lower levels in other tissues.

The protein resides in the cell membrane. The enzyme catalyses L-tyrosyl-[protein] + ATP = O-phospho-L-tyrosyl-[protein] + ADP + H(+). Its function is as follows. Receptor tyrosine kinase that transduces signals from the extracellular matrix into the cytoplasm by binding to several ligands including TULP1 or GAS6. Regulates many physiological processes including cell survival, migration and differentiation. Ligand binding at the cell surface induces dimerization and autophosphorylation of TYRO3 on its intracellular domain that provides docking sites for downstream signaling molecules. Following activation by ligand, interacts with PIK3R1 and thereby enhances PI3-kinase activity. Activates the AKT survival pathway, including nuclear translocation of NF-kappa-B and up-regulation of transcription of NF-kappa-B-regulated genes. TYRO3 signaling plays a role in various processes such as neuron protection from excitotoxic injury, platelet aggregation and cytoskeleton reorganization. Also plays an important role in inhibition of Toll-like receptors (TLRs)-mediated innate immune response by activating STAT1, which selectively induces production of suppressors of cytokine signaling SOCS1 and SOCS3. This is Tyrosine-protein kinase receptor TYRO3 (Tyro3) from Rattus norvegicus (Rat).